The following is a 240-amino-acid chain: UDP-2,3-diacylglucosamine hydrolase (240 aa).

Residues D7, H9, D40, N78, and H113 each contribute to the Mn(2+) site. 78-79 (NR) is a substrate binding site. Substrate is bound by residues D121, S159, T163, K166, and H194. Residues H194 and H196 each coordinate Mn(2+).

This sequence belongs to the LpxH family. Requires Mn(2+) as cofactor.

Its subcellular location is the cell inner membrane. The catalysed reaction is UDP-2-N,3-O-bis[(3R)-3-hydroxytetradecanoyl]-alpha-D-glucosamine + H2O = 2-N,3-O-bis[(3R)-3-hydroxytetradecanoyl]-alpha-D-glucosaminyl 1-phosphate + UMP + 2 H(+). Its pathway is glycolipid biosynthesis; lipid IV(A) biosynthesis; lipid IV(A) from (3R)-3-hydroxytetradecanoyl-[acyl-carrier-protein] and UDP-N-acetyl-alpha-D-glucosamine: step 4/6. In terms of biological role, hydrolyzes the pyrophosphate bond of UDP-2,3-diacylglucosamine to yield 2,3-diacylglucosamine 1-phosphate (lipid X) and UMP by catalyzing the attack of water at the alpha-P atom. Involved in the biosynthesis of lipid A, a phosphorylated glycolipid that anchors the lipopolysaccharide to the outer membrane of the cell. This chain is UDP-2,3-diacylglucosamine hydrolase, found in Pseudomonas putida (strain W619).